A 497-amino-acid polypeptide reads, in one-letter code: Apolipoprotein N-acyltransferase (497 aa).

Transmembrane regions (helical) follow at residues 21 to 41 (FAPF…ALLW), 51 to 71 (ALTG…WLYV), 85 to 105 (VLAL…TGWI), 119 to 139 (GMVA…FTGF), 157 to 177 (FAPV…AAWL), and 189 to 209 (FWLG…IHWT). The region spanning 221 to 461 (LQGNIPQNMK…GLHSTAQGFG (241 aa)) is the CN hydrolase domain. Residue E259 is the Proton acceptor of the active site. Residue K319 is part of the active site. The Nucleophile role is filled by C371. A helical transmembrane segment spans residues 472 to 492 (SLVFALIGLLLLAGSLAAFSG).

This sequence belongs to the CN hydrolase family. Apolipoprotein N-acyltransferase subfamily.

It localises to the cell inner membrane. It catalyses the reaction N-terminal S-1,2-diacyl-sn-glyceryl-L-cysteinyl-[lipoprotein] + a glycerophospholipid = N-acyl-S-1,2-diacyl-sn-glyceryl-L-cysteinyl-[lipoprotein] + a 2-acyl-sn-glycero-3-phospholipid + H(+). The protein operates within protein modification; lipoprotein biosynthesis (N-acyl transfer). In terms of biological role, catalyzes the phospholipid dependent N-acylation of the N-terminal cysteine of apolipoprotein, the last step in lipoprotein maturation. This chain is Apolipoprotein N-acyltransferase, found in Nitrosomonas europaea (strain ATCC 19718 / CIP 103999 / KCTC 2705 / NBRC 14298).